The primary structure comprises 458 residues: Peptidyl-prolyl cis-trans isomerase FKBP4 (458 aa).

Residue M1 is modified to N-acetylmethionine; in peptidyl-prolyl cis-trans isomerase FKBP4; alternate. N-acetylthreonine; in peptidyl-prolyl cis-trans isomerase FKBP4, N-terminally processed; partial is present on T2. Positions 50 to 138 (GDRVFVHYTG…VFEVELFEFK (89 aa)) constitute a PPIase FKBP-type 1 domain. Position 143 is a phosphothreonine; by CK2 (T143). The region spanning 167–253 (GAMVEVALEG…RYEVHLKSFE (87 aa)) is the PPIase FKBP-type 2 domain. Phosphotyrosine is present on Y220. Positions 267 to 400 (LEQSNIVKER…TQLAVCQQRT (134 aa)) are interaction with tubulin. TPR repeat units lie at residues 270–303 (SNIV…LEYE), 319–352 (LASH…DSNN), and 353–386 (EKGL…YPSN). The residue at position 282 (K282) is an N6-acetyllysine. Residue R373 is modified to Omega-N-methylarginine. The disordered stretch occupies residues 423–458 (HKAKTEVAAGDHPTDAEMKGEPNNVAGNQAQVKTEA). Phosphothreonine is present on T436. Residue K441 forms a Glycyl lysine isopeptide (Lys-Gly) (interchain with G-Cter in SUMO1) linkage. Residues 447–458 (VAGNQAQVKTEA) are compositionally biased toward polar residues.

Homodimer. Interacts with GLMN. Associates with HSP90AA1 and HSP70 in steroid hormone receptor complexes. Also interacts with peroxisomal phytanoyl-CoA alpha-hydroxylase (PHYH). Interacts with NR3C1 and dynein. Interacts with HSF1 in the HSP90 complex. Associates with tubulin. Interacts with MAPT/TAU. Interacts (via TPR domain) with S100A1, S100A2 and S100A6; the interaction is Ca(2+) dependent. Interaction with S100A1 and S100A2 (but not with S100A6) leads to inhibition of FKBP4-HSP90 interaction. Interacts with dynein; causes partially NR3C1 transport to the nucleus. Phosphorylation by CK2 results in loss of HSP90 binding activity. In terms of tissue distribution, widely detected in the brain (at protein level).

The protein localises to the cytoplasm. It localises to the cytosol. The protein resides in the mitochondrion. Its subcellular location is the nucleus. It is found in the cytoskeleton. The protein localises to the cell projection. It localises to the axon. It catalyses the reaction [protein]-peptidylproline (omega=180) = [protein]-peptidylproline (omega=0). With respect to regulation, inhibited by FK506. Immunophilin protein with PPIase and co-chaperone activities. Component of unligated steroid receptors heterocomplexes through interaction with heat-shock protein 90 (HSP90). Plays a role in the intracellular trafficking of heterooligomeric forms of steroid hormone receptors between cytoplasm and nuclear compartments. May have a protective role against oxidative stress in mitochondria. Also acts as a regulator of microtubule dynamics by inhibiting MAPT/TAU ability to promote microtubule assembly. The PPIase activity controls neuronal growth cones via regulation of TRPC1 channel opening. The chain is Peptidyl-prolyl cis-trans isomerase FKBP4 (Fkbp4) from Rattus norvegicus (Rat).